The following is a 487-amino-acid chain: MKSPLKLYFLPYISPGHMIPLSEMARLFANQGHHVTIITTTSNATLLQKYTTATLSLHLIPLPTKEAGLPDGLENFISVNDLETAGKLYYALSLLQPVIEEFITSNPPDCIVSDMFYPWTADLASQLQVPRMVFHAACIFAMCMKESMRGPDAPHLKVSSDYELFEVKGLPDPVFMTRAQLPDYVRTPNGYTQLMEMWREAEKKSYGVMVNNFYELDPAYTEHYSKIMGHKVWNIGPAAQILHRGSGDKIERVHKAVVGENQCLSWLDTKEPNSVFYVCFGSAIRFPDDQLYEIASALESSGAQFIWAVLGKDSDNSDSNSDSEWLPAGFEEKMKETGRGMIIRGWAPQVLILDHPSVGGFMTHCGWNSTIEGVSAGVGMVTWPLYAEQFYNEKLITQVLKIGVEAGVEEWNLWVDVGRKLVKREKIEAAIRAVMGEAGVEMRRKAKELSVKAKKAVQDGGSSHRNLMALIEDLQRIRDDKMSKVAN.

The Proton acceptor role is filled by His-17. The active-site Charge relay is Asp-114. 8 residues coordinate UDP: Ser-282, Trp-346, Ala-347, His-364, Asn-368, Ser-369, Glu-372, and Tyr-386.

The protein belongs to the UDP-glycosyltransferase family. As to expression, mainly expressed in flowers and flower buds and, to a lesser extent, in leaves, stems and roots.

It participates in secondary metabolite biosynthesis; terpenoid biosynthesis. Functionally, component of the oleanane-type triterpene saponins (e.g. saponarioside A and saponarioside B) biosynthetic pathway, leading to the production of natural products with detergent properties used as traditional sources of soap. A glycosyltransferase that mediates the conversion of QA-di to QA-tri via the elongation of the C-3 sugar chain with a D-xylose. This Saponaria officinalis (Common soapwort) protein is UDP-glucosyl transferase 73CC6.